The sequence spans 297 residues: Bifonsecin B biosynthesis cluster protein A (297 aa).

An N-terminal signal peptide occupies residues 1 to 20; that stretch reads MHFWWTAISAGLLCLPQALG. N-linked (GlcNAc...) asparagine glycans are attached at residues Asn-26, Asn-56, Asn-75, Asn-124, Asn-175, Asn-210, and Asn-280.

The protein belongs to the bfoA family.

Functionally, part of the gene cluster that mediates the biosynthesis of bifonsecin B, a dimeric gamma-naphthopyrone. The first step in the biosynthesis of bifonsecin B is the production of gamma-naphthopyrone precursor YWA1 by the non-reducing polyketide synthase albA, via condensation of one acetyl-CoA starter unit with 6 malonyl-CoA units. YWA1 is then methylated by bfoE at position C-6 to yield foncesin which is further methylated at position C-8 by bfoD to produce fonsecin B. A key enzyme in the biosynthetic pathway is the cytochrome P450 monooxygenase bfoB which catalyzes the oxidative dimerization of fonsecin B to bifonsecin B. Bfob also catalyzes the oxidative dimerization of rubrofusarin B into nigerone. The stereoselectivity of bfoB is influenced by the two natural monomeric substrates; homodimerization of fonsecin B yields a stereochemically pure biaryl, M-foncerine B, while rubrofusarin B yields a mixture of enantiomers M- and P-nigerone. The function of bfoA within the bifonsecin B biosynthesis pathway has not been determined yet. The sequence is that of Bifonsecin B biosynthesis cluster protein A from Aspergillus brasiliensis (strain CBS 101740 / IMI 381727 / IBT 21946).